Here is a 407-residue protein sequence, read N- to C-terminus: Arginine deiminase (407 aa).

Cys397 (amidino-cysteine intermediate) is an active-site residue.

Belongs to the arginine deiminase family.

Its subcellular location is the cytoplasm. It carries out the reaction L-arginine + H2O = L-citrulline + NH4(+). Its pathway is amino-acid degradation; L-arginine degradation via ADI pathway; carbamoyl phosphate from L-arginine: step 1/2. This chain is Arginine deiminase, found in Limosilactobacillus fermentum (strain NBRC 3956 / LMG 18251) (Lactobacillus fermentum).